Reading from the N-terminus, the 100-residue chain is Aspartyl/glutamyl-tRNA(Asn/Gln) amidotransferase subunit C (100 aa).

It belongs to the GatC family. Heterotrimer of A, B and C subunits.

It catalyses the reaction L-glutamyl-tRNA(Gln) + L-glutamine + ATP + H2O = L-glutaminyl-tRNA(Gln) + L-glutamate + ADP + phosphate + H(+). The catalysed reaction is L-aspartyl-tRNA(Asn) + L-glutamine + ATP + H2O = L-asparaginyl-tRNA(Asn) + L-glutamate + ADP + phosphate + 2 H(+). In terms of biological role, allows the formation of correctly charged Asn-tRNA(Asn) or Gln-tRNA(Gln) through the transamidation of misacylated Asp-tRNA(Asn) or Glu-tRNA(Gln) in organisms which lack either or both of asparaginyl-tRNA or glutaminyl-tRNA synthetases. The reaction takes place in the presence of glutamine and ATP through an activated phospho-Asp-tRNA(Asn) or phospho-Glu-tRNA(Gln). The sequence is that of Aspartyl/glutamyl-tRNA(Asn/Gln) amidotransferase subunit C from Streptococcus pneumoniae (strain Taiwan19F-14).